The chain runs to 66 residues: Large ribosomal subunit protein bL35 (66 aa).

Over residues 1–28 (MPKMKTHRGSAKRFKRTGSGKLKRRHGF) the composition is skewed to basic residues. A disordered region spans residues 1 to 50 (MPKMKTHRGSAKRFKRTGSGKLKRRHGFTSHMFANKSQKQKRKLRKSAMV).

The protein belongs to the bacterial ribosomal protein bL35 family.

The protein is Large ribosomal subunit protein bL35 of Listeria monocytogenes serotype 4a (strain HCC23).